Reading from the N-terminus, the 100-residue chain is NADH-quinone oxidoreductase subunit K (100 aa).

The next 3 membrane-spanning stretches (helical) occupy residues 3-23, 29-49, and 60-80; these read LNAY…GIFL, ISIM…FVAF, and IFTF…LAIL.

This sequence belongs to the complex I subunit 4L family. As to quaternary structure, NDH-1 is composed of 14 different subunits. Subunits NuoA, H, J, K, L, M, N constitute the membrane sector of the complex.

It localises to the cell inner membrane. The enzyme catalyses a quinone + NADH + 5 H(+)(in) = a quinol + NAD(+) + 4 H(+)(out). Its function is as follows. NDH-1 shuttles electrons from NADH, via FMN and iron-sulfur (Fe-S) centers, to quinones in the respiratory chain. The immediate electron acceptor for the enzyme in this species is believed to be ubiquinone. Couples the redox reaction to proton translocation (for every two electrons transferred, four hydrogen ions are translocated across the cytoplasmic membrane), and thus conserves the redox energy in a proton gradient. This chain is NADH-quinone oxidoreductase subunit K, found in Magnetococcus marinus (strain ATCC BAA-1437 / JCM 17883 / MC-1).